We begin with the raw amino-acid sequence, 411 residues long: Zinc finger protein draculin (411 aa).

The tract at residues 1 to 33 (MKNTTKPCRTEHHNAEGQRDRMEGNKKGETKAK) is disordered. The segment covering 8 to 32 (CRTEHHNAEGQRDRMEGNKKGETKA) has biased composition (basic and acidic residues). C2H2-type zinc fingers lie at residues 36 to 58 (VACS…MRVH), 64 to 86 (YRCD…LDIH), 92 to 114 (YTCD…MTLH), 120 to 142 (YKCD…MKLH), 148 to 170 (HKCE…LMVH), 176 to 198 (YTCD…MNIH), 204 to 226 (YTCD…MRFH), 232 to 254 (FTCD…MKIH), 260 to 282 (YTCD…MTHH), 288 to 310 (FHCD…IKTH), 316 to 338 (YSCL…EKRH), 344 to 366 (FMCF…LPVH), and 372 to 394 (YMCS…EKTH).

In terms of tissue distribution, specifically expressed in the hematopoietic lineage during embryogenesis; first expressed at the late blastula stage around the blastoderm margin. During gastrulation, restricted to the ventral mesoderm, the presumptive prechordal plate and the dorso-marginal cells of the organizer. At the 3-somite stage, strongly expressed in a caudal domain (marking the erythroid lineage) and a cephalic domain of the lateral mesoderm. At the 8- to 10-somite stage, caudal expression is in two bands of lateral mesoderm which later converge at the midline. Anterior expression is also in two bands of lateral mesoderm which converge as two patches at the midline by the 15-somite stage, with increased scattering of single cells (macrophage precursors) away from the midline to the yolksac. Once at the yolksac, expression is lost. By 20-24 hours post-fertilization (hpf), expressed in proerythroblasts in the erythroid blood island centered above the uro-genital opening. Expression persists in circulating erythroblasts but is lost in mature erythrocytes.

The sequence is that of Zinc finger protein draculin from Danio rerio (Zebrafish).